Reading from the N-terminus, the 222-residue chain is Mediator of RNA polymerase II transcription subunit 7 (222 aa).

Residues 34 to 55 (YKEKKAASAKQTAPNNSNGGSE) are disordered. A compositionally biased stretch (polar residues) spans 42 to 53 (AKQTAPNNSNGG).

It belongs to the Mediator complex subunit 7 family. Component of the Mediator complex, which is composed of at least 21 subunits that form three structurally distinct submodules. The Mediator head module contains MED6, MED8, MED11, SRB4/MED17, SRB5/MED18, ROX3/MED19, SRB2/MED20 and SRB6/MED22, the middle module contains MED1, MED4, NUT1/MED5, MED7, CSE2/MED9, NUT2/MED10, SRB7/MED21 and SOH1/MED31, and the tail module contains MED2, PGD1/MED3, RGR1/MED14, GAL11/MED15 and SIN4/MED16. The head and the middle modules interact directly with RNA polymerase II, whereas the elongated tail module interacts with gene-specific regulatory proteins. MED7 interacts directly with MED1, MED4 and SRB7/MED21.

It is found in the nucleus. Its function is as follows. Component of the Mediator complex, a coactivator involved in the regulated transcription of nearly all RNA polymerase II-dependent genes. Mediator functions as a bridge to convey information from gene-specific regulatory proteins to the basal RNA polymerase II transcription machinery. The Mediator complex, having a compact conformation in its free form, is recruited to promoters by direct interactions with regulatory proteins and serves for the assembly of a functional preinitiation complex with RNA polymerase II and the general transcription factors. The Mediator complex unfolds to an extended conformation and partially surrounds RNA polymerase II, specifically interacting with the unphosphorylated form of the C-terminal domain (CTD) of RNA polymerase II. The Mediator complex dissociates from the RNA polymerase II holoenzyme and stays at the promoter when transcriptional elongation begins. The protein is Mediator of RNA polymerase II transcription subunit 7 (MED7) of Saccharomyces cerevisiae (strain ATCC 204508 / S288c) (Baker's yeast).